Reading from the N-terminus, the 467-residue chain is MATGADVRDILELGGPEGDAASGTISKKDIINPDKKKSKKSSETLTFKRPEGMHREVYALLYSDKKDAPPLLPSDTGQGYRTVKAKLGSKKVRPWKWMPFTNPARKDGAMFFHWRRAAEEGKDYPFARFNKTVQVPVYSEQEYQLYLHDDAWTKAETDHLFDLSRRFDLRFVVIHDRYDHQQFKKRSVEDLKERYYHICAKLANVRAVPGTDLKIPVFDAGHERRRKEQLERLYNRTPEQVAEEEYLLQELRKIEARKKEREKRSQDLQKLITAADTTAEQRRTERKAPKKKLPQKKEAEKPAVPETAGIKFPDFKSAGVTLRSQRMKLPSSVGQKKIKALEQMLLELGVELSPTPTEELVHMFNELRSDLVLLYELKQACANCEYELQMLRHRHEALARAGVLGGPATPASGPGPASAEPAVTEPGLGPDPKDTIIDVVGAPLTPNSRKRRESASSSSSVKKAKKP.

Composition is skewed to basic and acidic residues over residues 1-11 (MATGADVRDIL) and 26-48 (SKKDIINPDKKKSKKSSETLTFK). Positions 1–48 (MATGADVRDILELGGPEGDAASGTISKKDIINPDKKKSKKSSETLTFK) are disordered. A Glycyl lysine isopeptide (Lys-Gly) (interchain with G-Cter in SUMO2) cross-link involves residue Lys27. An SANT domain is found at 149–199 (DDAWTKAETDHLFDLSRRFDLRFVVIHDRYDHQQFKKRSVEDLKERYYHIC). Lys214 participates in a covalent cross-link: Glycyl lysine isopeptide (Lys-Gly) (interchain with G-Cter in SUMO2). Positions 225 to 275 (RRKEQLERLYNRTPEQVAEEEYLLQELRKIEARKKEREKRSQDLQKLITAA) form a coiled coil. Positions 258–267 (KKEREKRSQD) are enriched in basic and acidic residues. Disordered stretches follow at residues 258–305 (KKER…PAVP) and 404–467 (LGGP…AKKP). Low complexity predominate over residues 406–422 (GPATPASGPGPASAEPA). At Thr445 the chain carries Phosphothreonine. At Ser448 the chain carries Phosphoserine.

In terms of assembly, component of the NuA4 histone acetyltransferase complex which contains the catalytic subunit KAT5/TIP60 and the subunits EP400, TRRAP/PAF400, BRD8/SMAP, EPC1, DMAP1/DNMAP1, RUVBL1/TIP49, RUVBL2, ING3, actin, ACTL6A/BAF53A, MORF4L1/MRG15, MORF4L2/MRGX, MRGBP, YEATS4/GAS41, VPS72/YL1 and MEAF6. Component of a NuA4-related complex which contains EP400, TRRAP/PAF400, SRCAP, BRD8/SMAP, EPC1, DMAP1/DNMAP1, RUVBL1/TIP49, RUVBL2, actin, ACTL6A/BAF53A, VPS72 and YEATS4/GAS41. DMAP1 also forms a complex with DNMT1 and HDAC2. Throughout S phase it interacts directly with the N-terminus of DNMT1, which serves to recruit DMAP1 to replication foci. DMAP1 interacts with ING1, a component of the mSin3A transcription repressor complex, although this interaction is not required for recruitment of ING1 to heterochromatin. Interacts directly with the transcriptional corepressor TSG101. Interacts with the pro-apoptotic protein DAXX. Interacts with URI1.

It is found in the nucleus. The protein resides in the cytoplasm. In terms of biological role, involved in transcription repression and activation. Its interaction with HDAC2 may provide a mechanism for histone deacetylation in heterochromatin following replication of DNA at late firing origins. Can also repress transcription independently of histone deacetylase activity. May specifically potentiate DAXX-mediated repression of glucocorticoid receptor-dependent transcription. Component of the NuA4 histone acetyltransferase (HAT) complex which is involved in transcriptional activation of select genes principally by acetylation of nucleosomal histones H4 and H2A. This modification may both alter nucleosome - DNA interactions and promote interaction of the modified histones with other proteins which positively regulate transcription. This complex may be required for the activation of transcriptional programs associated with oncogene and proto-oncogene mediated growth induction, tumor suppressor mediated growth arrest and replicative senescence, apoptosis, and DNA repair. NuA4 may also play a direct role in DNA repair when recruited to sites of DNA damage. Participates in the nuclear localization of URI1 and increases its transcriptional corepressor activity. In Homo sapiens (Human), this protein is DNA methyltransferase 1-associated protein 1 (DMAP1).